A 404-amino-acid chain; its full sequence is MKIVKAEVFVTCPGRNFVTLKITTEDGITGLGDATLNGRELSVASYLQDHLCPQLIGRDAHRIEDIWQFFYKGAYWRRGPVTMSAISAVDMALWDIKAKAANMPLYQLLGGASREGVMVYCHTTGHSIDEALDDYARHQELGFKAIRVQCGIPGMKTTYGMSKGKGLAYEPATKGQWPEEQLWSTEKYLDFMPKLFDAVRNKFGFNEHLLHDMHHRLTPIEAARFGKSIEDYRMFWMEDPTPAENQECFRLIRQHTVTPIAVGEVFNSIWDCKQLIEEQLIDYIRTTLTHAGGITGMRRIADFASLYQVRTGSHGPSDLSPVCMAAALHFDLWVPNFGVQEYMGYSEQMLEVFPHNWTFDNGYMHPGDKPGLGIEFDEKLAAKYPYEPAYLPVARLEDGTLWNW.

It belongs to the mandelate racemase/muconate lactonizing enzyme family.

Functionally, probably involved in the degradation of homoserine lactone (HSL) or of a metabolite of HSL that signals starvation. This chain is Starvation-sensing protein RspA, found in Escherichia coli (strain K12).